Reading from the N-terminus, the 250-residue chain is GTP cyclohydrolase 1 type 2 homolog (250 aa).

Histidine 63, histidine 64, aspartate 100, histidine 218, and glutamate 222 together coordinate a divalent metal cation.

It belongs to the GTP cyclohydrolase I type 2/NIF3 family. Homohexamer.

This Pyrococcus abyssi (strain GE5 / Orsay) protein is GTP cyclohydrolase 1 type 2 homolog.